A 382-amino-acid chain; its full sequence is Homoserine O-acetyltransferase (382 aa).

The AB hydrolase-1 domain occupies 52 to 356 (NVVMVLHALT…TYGHDGFLVE (305 aa)). Ser157 serves as the catalytic Nucleophile. Arg227 contributes to the substrate binding site. Catalysis depends on residues Asp320 and His350. Asp351 is a substrate binding site.

This sequence belongs to the AB hydrolase superfamily. MetX family. Homodimer.

It is found in the cytoplasm. It catalyses the reaction L-homoserine + acetyl-CoA = O-acetyl-L-homoserine + CoA. It functions in the pathway amino-acid biosynthesis; L-methionine biosynthesis via de novo pathway; O-acetyl-L-homoserine from L-homoserine: step 1/1. Its function is as follows. Transfers an acetyl group from acetyl-CoA to L-homoserine, forming acetyl-L-homoserine. In Mycobacterium leprae (strain TN), this protein is Homoserine O-acetyltransferase.